An 838-amino-acid polypeptide reads, in one-letter code: Periplasmic nitrate reductase (838 aa).

Positions 1-29 form a signal peptide, tat-type signal; the sequence is MKVSRRAFIKQTAAAATASVAGVTLPAGA. In terms of domain architecture, 4Fe-4S Mo/W bis-MGD-type spans 41–97; sequence LKWSKAPCRFCGTGCGVEVAVKDNRVVATQGDPKAEVNRGLNCVKGYFLSKIMYGKD. 4 residues coordinate [4Fe-4S] cluster: C48, C51, C55, and C83. Residues K85, Q152, N177, C181, 214–221, 245–249, M382, Q386, N492, 518–519, K541, D568, and 728–737 each bind Mo-bis(molybdopterin guanine dinucleotide); these read WGSNMAEM, STFTH, SD, and TGRVLEHWHS. W804 serves as a coordination point for substrate. N812 and K829 together coordinate Mo-bis(molybdopterin guanine dinucleotide).

Belongs to the prokaryotic molybdopterin-containing oxidoreductase family. NasA/NapA/NarB subfamily. Component of the periplasmic nitrate reductase NapAB complex composed of NapA and NapB. It depends on [4Fe-4S] cluster as a cofactor. Mo-bis(molybdopterin guanine dinucleotide) serves as cofactor. Post-translationally, predicted to be exported by the Tat system. The position of the signal peptide cleavage has not been experimentally proven.

Its subcellular location is the periplasm. The enzyme catalyses 2 Fe(II)-[cytochrome] + nitrate + 2 H(+) = 2 Fe(III)-[cytochrome] + nitrite + H2O. Its function is as follows. Catalytic subunit of the periplasmic nitrate reductase complex NapAB. Receives electrons from NapB and catalyzes the reduction of nitrate to nitrite. This is Periplasmic nitrate reductase from Ralstonia pickettii (strain 12J).